Reading from the N-terminus, the 283-residue chain is Tropomyosin (283 aa).

The stretch at methionine 1–leucine 283 forms a coiled coil.

The protein belongs to the tropomyosin family. Homodimer.

In terms of biological role, tropomyosin, in association with the troponin complex, plays a central role in the calcium dependent regulation of muscle contraction. This chain is Tropomyosin, found in Locusta migratoria (Migratory locust).